The primary structure comprises 423 residues: MAFQIPRGTQDILPGEVEKWQYVEKIARDICKRYNYHEIRTPIFEHTELFLRGVGDTTDIVQKEMYTFEDRAGRSMTLRPEGTAPVVRSFVENKMYGNPNQPIKLYYIGPMFRYERPQAGRFRQFVQFGVEAIGSNDPAIDAEVIAMAMELYRSLGLKKLRLVINSLGDVETRKAHRQALIDHFKSRIHELCEDCQVRLEKNPLRILDCKKDRDHELMATAPSILDYLNDESRHYFEKVKAYLTKLGIPFEVDPRLVRGLDYYHHTTFEIMSDAEGFGAITTLCGGGRYSGLVQEIGGPETPGIGFALSIERLLAALEAEGITLPISEGIDCYVVAVGEKAKDESILLVHKLRKAGIVADKDYQDRKIKAQLKSADRLNAKFVAILGDDELAKEVINIKEMSTGEQTEVPLHSVVDYLKERLS.

It belongs to the class-II aminoacyl-tRNA synthetase family. In terms of assembly, homodimer.

It is found in the cytoplasm. The catalysed reaction is tRNA(His) + L-histidine + ATP = L-histidyl-tRNA(His) + AMP + diphosphate + H(+). The polypeptide is Histidine--tRNA ligase (Geobacillus sp. (strain WCH70)).